The sequence spans 144 residues: Large ribosomal subunit protein uL14 (144 aa).

This sequence belongs to the universal ribosomal protein uL14 family. Part of the 50S ribosomal subunit. Forms a cluster with proteins L3 and L24e, part of which may contact the 16S rRNA in 2 intersubunit bridges.

Its function is as follows. Binds to 23S rRNA. Forms part of two intersubunit bridges in the 70S ribosome. In Pyrobaculum aerophilum (strain ATCC 51768 / DSM 7523 / JCM 9630 / CIP 104966 / NBRC 100827 / IM2), this protein is Large ribosomal subunit protein uL14.